Consider the following 1086-residue polypeptide: MANLLKTVVTGCSCPFLSNLGSCKVLPGKKNFLRAFHTHRILWCKAPVKPGIPYKQLTVGVPKEIFQNEKRVALSPAGVQALVKQGFNVVVESGAGEASKFSDDHYRAAGAQIQGAKEVLASDLVVKVRAPMLNPTLGIHEADLLKTSGTLISFIYPAQNPDLLNKLSKRNTTVLAMDQVPRVTIAQGYDALSSMANIAGYKAVVLAANHFGRFFTGQITAAGKVPPAKILIVGGGVAGLASAGAAKSMGAIVRGFDTRAAALEQFKSLGAEPLEVDLKESGEGQGGYAKEMSKEFIEAEMKLFAQQCKEVDILISTALIPGKKAPILFNKEMIESMKEGSVVVDLAAEAGGNFETTKPGELYVHKGITHIGYTDLPSRMATQASTLYSNNITKLLKAISPDKDNFYFEVKDDFDFGTMGHVIRGTVVMKDGQVIFPAPTPKNIPQGAPVKQKTVAELEAEKAATITPFRKTMTSASVYTAGLTGILGLGIAAPNLAFSQMVTTFGLAGIVGYHTVWGVTPALHSPLMSVTNAISGLTAVGGLVLMGGHLYPSTTSQGLAALATFISSVNIAGGFLVTQRMLDMFKRPTDPPEYNYLYLLPAGTFVGGYLASLYSGYNIEQIMYLGSGLCCVGALAGLSTQGTARLGNALGMIGVAGGLAATLGGLKPCPELLAQMSGAMALGGTIGLTIAKRIQISDLPQLVAAFHSLVGLAAVLTCIAEYIIEYPHFATDAAANLTKIVAYLGTYIGGVTFSGSLVAYGKLQGILKSAPLLLPGRHLLNAGLLAASVGGIIPFMMDPSFTTGITCLGSVSALSAVMGVTLTAAIGGADMPVVITVLNSYSGWALCAEGFLLNNNLLTIVGALIGSSGAILSYIMCVAMNRSLANVILGGYGTTSTAGGKPMEISGTHTEINLDNAIDMIREANSIIITPGYGLCAAKAQYPIADLVKMLSEQGKKVRFGIHPVAGRMPGQLNVLLAEAGVPYDIVLEMDEINHDFPDTDLVLVIGANDTVNSAAQEDPNSIIAGMPVLEVWKSKQVIVMKRSLGVGYAAVDNPIFYKPNTAMLLGDAKKTCDALQAKVRESYQK.

The N-terminal 43 residues, 1 to 43, are a transit peptide targeting the mitochondrion; that stretch reads MANLLKTVVTGCSCPFLSNLGSCKVLPGKKNFLRAFHTHRILW. The Mitochondrial matrix portion of the chain corresponds to 44–474; sequence CKAPVKPGIP…TITPFRKTMT (431 aa). The residue at position 70 (Lys-70) is an N6-acetyllysine. An N6-succinyllysine modification is found at Lys-117. 182 to 184 lines the NAD(+) pocket; it reads RVT. Lys-224 is modified (N6-succinyllysine). NAD(+) is bound by residues Val-237, 257-259, and Gly-287; that span reads DTR. Lys-294 is subject to N6-succinyllysine. NAD(+) contacts are provided by Glu-300 and Leu-319. Residue Lys-331 is modified to N6-succinyllysine. The residue at position 397 (Lys-397) is an N6-acetyllysine. Helical transmembrane passes span 475-493, 501-521, 527-546, and 558-578; these read SASVYTAGLTGILGLGIAA, MVTTFGLAGIVGYHTVWGVTP, LMSVTNAISGLTAVGGLVLM, and GLAALATFISSVNIAGGFLVT. The Mitochondrial matrix portion of the chain corresponds to 579-595; that stretch reads QRMLDMFKRPTDPPEYN. A run of 5 helical transmembrane segments spans residues 596-616, 622-642, 646-666, 672-691, and 702-722; these read YLYLLPAGTFVGGYLASLYSG, IMYLGSGLCCVGALAGLSTQG, LGNALGMIGVAGGLAATLGGL, LLAQMSGAMALGGTIGLTIA, and LVAAFHSLVGLAAVLTCIAEY. Over 723 to 739 the chain is Cytoplasmic; sequence IIEYPHFATDAAANLTK. The next 5 helical transmembrane spans lie at 740–760, 778–797, 801–819, 833–853, and 857–879; these read IVAYLGTYIGGVTFSGSLVAY, HLLNAGLLAASVGGIIPFMM, FTTGITCLGSVSALSAVMG, VVITVLNSYSGWALCAEGFLL, and LLTIVGALIGSSGAILSYIMCVA. Residues 880–1086 are Mitochondrial matrix-facing; the sequence is MNRSLANVIL…QAKVRESYQK (207 aa). NADP(+) is bound by residues Tyr-933, 965–970, 1007–1011, 1026–1027, 1042–1049, and 1068–1069; these read VAGRMP, GANDT, GM, KRSLGVGY, and DA. At Lys-1079 the chain carries N6-succinyllysine.

The protein in the N-terminal section; belongs to the AlaDH/PNT family. In the C-terminal section; belongs to the PNT beta subunit family. As to quaternary structure, homodimer.

It is found in the mitochondrion inner membrane. The catalysed reaction is NAD(+) + NADPH + H(+)(in) = NADH + NADP(+) + H(+)(out). Its function is as follows. The transhydrogenation between NADH and NADP is coupled to respiration and ATP hydrolysis and functions as a proton pump across the membrane. May play a role in reactive oxygen species (ROS) detoxification in the adrenal gland. The protein is NAD(P) transhydrogenase, mitochondrial (NNT) of Ovis aries (Sheep).